Consider the following 445-residue polypeptide: Probable glycine dehydrogenase (decarboxylating) subunit 1 (445 aa).

This sequence belongs to the GcvP family. N-terminal subunit subfamily. In terms of assembly, the glycine cleavage system is composed of four proteins: P, T, L and H. In this organism, the P 'protein' is a heterodimer of two subunits.

It carries out the reaction N(6)-[(R)-lipoyl]-L-lysyl-[glycine-cleavage complex H protein] + glycine + H(+) = N(6)-[(R)-S(8)-aminomethyldihydrolipoyl]-L-lysyl-[glycine-cleavage complex H protein] + CO2. The glycine cleavage system catalyzes the degradation of glycine. The P protein binds the alpha-amino group of glycine through its pyridoxal phosphate cofactor; CO(2) is released and the remaining methylamine moiety is then transferred to the lipoamide cofactor of the H protein. This Chlorobium chlorochromatii (strain CaD3) protein is Probable glycine dehydrogenase (decarboxylating) subunit 1.